The sequence spans 614 residues: 1-deoxy-D-xylulose-5-phosphate synthase (614 aa).

Residues His74 and 115–117 each bind thiamine diphosphate; that span reads AHS. Mg(2+) is bound at residue Asp146. Residues 147–148, Asn175, Tyr282, and Glu363 contribute to the thiamine diphosphate site; that span reads GA. Asn175 provides a ligand contact to Mg(2+).

The protein belongs to the transketolase family. DXPS subfamily. In terms of assembly, homodimer. It depends on Mg(2+) as a cofactor. Requires thiamine diphosphate as cofactor.

The enzyme catalyses D-glyceraldehyde 3-phosphate + pyruvate + H(+) = 1-deoxy-D-xylulose 5-phosphate + CO2. The protein operates within metabolic intermediate biosynthesis; 1-deoxy-D-xylulose 5-phosphate biosynthesis; 1-deoxy-D-xylulose 5-phosphate from D-glyceraldehyde 3-phosphate and pyruvate: step 1/1. In terms of biological role, catalyzes the acyloin condensation reaction between C atoms 2 and 3 of pyruvate and glyceraldehyde 3-phosphate to yield 1-deoxy-D-xylulose-5-phosphate (DXP). This is 1-deoxy-D-xylulose-5-phosphate synthase from Nitrosospira multiformis (strain ATCC 25196 / NCIMB 11849 / C 71).